A 61-amino-acid polypeptide reads, in one-letter code: Beta-insect depressant toxin BaIT2 (61 aa).

One can recognise an LCN-type CS-alpha/beta domain in the interval 1–61 (DGYIRRRDGC…TWKSETNTCG (61 aa)). Intrachain disulfides connect C10-C60, C14-C35, C21-C42, and C25-C44.

The protein belongs to the long (4 C-C) scorpion toxin superfamily. Sodium channel inhibitor family. Beta subfamily. As to expression, expressed by the venom gland.

Its subcellular location is the secreted. Functionally, depressant insect beta-toxins cause a transient contraction paralysis followed by a slow flaccid paralysis. They bind voltage-independently at site-4 of sodium channels (Nav) and shift the voltage of activation toward more negative potentials thereby affecting sodium channel activation and promoting spontaneous and repetitive firing. This toxin is active only on insects. The chain is Beta-insect depressant toxin BaIT2 from Buthacus arenicola (North African scorpion).